Here is a 139-residue protein sequence, read N- to C-terminus: Large ribosomal subunit protein uL16 (139 aa).

Residues 74-94 form a disordered region; the sequence is LTKKPAETRQGSGKGSPESWV.

The protein belongs to the universal ribosomal protein uL16 family. Part of the 50S ribosomal subunit.

Its function is as follows. Binds 23S rRNA and is also seen to make contacts with the A and possibly P site tRNAs. This is Large ribosomal subunit protein uL16 from Saccharopolyspora erythraea (strain ATCC 11635 / DSM 40517 / JCM 4748 / NBRC 13426 / NCIMB 8594 / NRRL 2338).